The sequence spans 682 residues: Protein SYG1 homolog (682 aa).

Positions 1 to 219 (MKFGKVIEGQ…HTDLQGFWVD (219 aa)) constitute an SPX domain. The Cytoplasmic portion of the chain corresponds to 1-274 (MKFGKVIEGQ…KEHFSANSMR (274 aa)). The helical transmembrane segment at 275 to 295 (FGLLFGAGLPLAIEAACYYNA) threads the bilayer. Over 296-300 (TEQSS) the chain is Extracellular. The helical transmembrane segment at 301–321 (YLLQIWGGFFLVIFAFVLFDL) threads the bilayer. Topologically, residues 322–348 (DCYVWEKTRVNYMLIFEFNQRKSLNWR) are cytoplasmic. Residues 349-369 (QHLEIVGAVFFIFSLFFFLCM) traverse the membrane as a helical segment. At 370 to 377 (RNFFPGFT) the chain is on the extracellular side. Residues 378-398 (IYFPALFLGVVGTFLIAPVIV) traverse the membrane as a helical segment. Residues 399–406 (PYWRMRRY) are Cytoplasmic-facing. Residues 407 to 424 (LIIQLIRVFLSGLSTVHF) traverse the membrane as a helical segment. Topologically, residues 425–426 (QD) are extracellular. The chain crosses the membrane as a helical span at residues 427 to 447 (FFFADQMVSLTYACGNISLFF). Residues 448–525 (CLYKRLWRQP…WRIHPGLKYR (78 aa)) lie on the Cytoplasmic side of the membrane. The region spanning 459–654 (LCNSSHSPLL…VKPHSDVFVS (196 aa)) is the EXS domain. A helical membrane pass occupies residues 526-546 (VLYTIFAGVNSLFSYTWDILM). Residues 547–571 (DWNLLVRKDGRWQFREHRILKQLWP) lie on the Extracellular side of the membrane. The helical transmembrane segment at 572–592 (YIIAMILNFIVRSSFIFYCIF) threads the bilayer. The Cytoplasmic portion of the chain corresponds to 593-682 (PNHIQHSSGI…QTDVDEAQFS (90 aa)). Residues 659–682 (SDKNYTDDEDSMDDQTDVDEAQFS) form a disordered region. The segment covering 665–682 (DDEDSMDDQTDVDEAQFS) has biased composition (acidic residues).

The protein belongs to the SYG1 (TC 2.A.94) family.

It localises to the cell membrane. Functionally, may function in G-protein coupled signal transduction. The protein is Protein SYG1 homolog of Schizosaccharomyces pombe (strain 972 / ATCC 24843) (Fission yeast).